The chain runs to 447 residues: MARKSSLLKRAAIAVVSVIAIYVILNASVSRSLPSSSDLPRQLIREDDDDEGRAPIQPRVRVYMYNLPKRFTYGLIEQHSIARGGIKKPVGDVTTLKYPGHQHMHEWYLFSDLNQPEVDRSGSPIVRVSDPADADLFYVPVFSSLSLIVNAGRPVEAGSGYSDEKMQEGLVEWLEGQEWWRRNAGRDHVIPAGDPNALYRILDRVKNAVLLVSDFGRLRPDQGSFVKDVVIPYSHRVNLFNGEIGVEDRNTLLFFMGNRYRKDGGKVRDLLFQVLEKEDDVTIKHGTQSRENRRAATKGMHTSKFCLNPAGDTPSACRLFDSIVSLCVPLIVSDSIELPFEDVIDYRKFSIFVEANAALQPGFLVQMLRKIKTKKILEYQREMKSVRRYFDYDNPNGAVKEIWRQVSHKLPLIKLMSNRDRRLVLRNLTEPNCSCLCTNQTGLITSI.

The Cytoplasmic portion of the chain corresponds to 1–6; it reads MARKSS. A helical; Signal-anchor for type II membrane protein membrane pass occupies residues 7–29; that stretch reads LLKRAAIAVVSVIAIYVILNASV. Residues 30-447 are Lumenal-facing; that stretch reads SRSLPSSSDL…TNQTGLITSI (418 aa). Residues 32-41 show a composition bias toward low complexity; the sequence is SLPSSSDLPR. Residues 32 to 52 form a disordered region; it reads SLPSSSDLPRQLIREDDDDEG. 3 N-linked (GlcNAc...) asparagine glycosylation sites follow: N427, N432, and N439.

It belongs to the glycosyltransferase 47 family. In terms of assembly, homodimer and heterodimer with ARAD2. Expressed in root vasculature, cotyledons, leaves, stems, vascular tissue of sepals, petals and stamens, pollen grains, mature siliques and abscission region of seeds.

Its subcellular location is the golgi apparatus membrane. In terms of biological role, probable arabinosyl transferase responsible for the polymerization of arabinose into the arabinan of arabinogalactan. May function as inverting enzyme using UDP-beta-L-arabinopyranoside. May be important for arabinan side chains of rhamnogalacturonan I (RG-I), a major component of pectins. Cell wall pectic arabinans are involved in thigmomorphogenesis response of inflorescence stems to mechanical stress. This is Probable arabinosyltransferase ARAD1 (ARAD1) from Arabidopsis thaliana (Mouse-ear cress).